Reading from the N-terminus, the 278-residue chain is Probable endonuclease 4 (278 aa).

Residues His66, His106, Glu140, Asp172, His175, His209, Asp222, His224, and Glu254 each coordinate Zn(2+).

This sequence belongs to the AP endonuclease 2 family. The cofactor is Zn(2+).

It catalyses the reaction Endonucleolytic cleavage to 5'-phosphooligonucleotide end-products.. Functionally, endonuclease IV plays a role in DNA repair. It cleaves phosphodiester bonds at apurinic or apyrimidinic (AP) sites, generating a 3'-hydroxyl group and a 5'-terminal sugar phosphate. This chain is Probable endonuclease 4, found in Haloquadratum walsbyi (strain DSM 16790 / HBSQ001).